The following is a 379-amino-acid chain: uncharacterized protein (379 aa).

An ATP-binding site is contributed by 29–36 (GPLNSGKT).

The protein belongs to the archaeal ATPase family.

This is an uncharacterized protein from Methanocaldococcus jannaschii (strain ATCC 43067 / DSM 2661 / JAL-1 / JCM 10045 / NBRC 100440) (Methanococcus jannaschii).